A 440-amino-acid chain; its full sequence is Histidinol dehydrogenase homolog 2 (440 aa).

His265 serves as a coordination point for Zn(2+). Active-site proton acceptor residues include Glu333 and His334. Residue His426 coordinates Zn(2+).

This sequence belongs to the histidinol dehydrogenase family. It depends on Zn(2+) as a cofactor.

In Mesorhizobium japonicum (strain LMG 29417 / CECT 9101 / MAFF 303099) (Mesorhizobium loti (strain MAFF 303099)), this protein is Histidinol dehydrogenase homolog 2.